Here is a 522-residue protein sequence, read N- to C-terminus: Maturase K (522 aa).

This sequence belongs to the intron maturase 2 family. MatK subfamily.

The protein localises to the plastid. It localises to the chloroplast. Its function is as follows. Usually encoded in the trnK tRNA gene intron. Probably assists in splicing its own and other chloroplast group II introns. This Iris sanguinea (Japanese iris) protein is Maturase K.